The chain runs to 269 residues: Surfeit locus protein 4 (269 aa).

5 helical membrane passes run 65–85 (LASSFVFLNLLGQLTGCVLVL), 92–112 (YACFGLFGIIALQTIAYSILW), 179–199 (FFSIIQNIVGTALMILVAIGF), 203–223 (LAALTLVVWLFAINVYFNAFW), and 242–262 (TMSVIGGLLLVVALGPGGVSM). The short motif at 266–269 (KKEW) is the Di-lysine motif element.

This sequence belongs to the SURF4 family. Found in a complex composed at least of SURF4, TMED2 and TMED10. May interact with LMAN1. Interacts with ZFYVE27 and with KIF5A in a ZFYVE27-dependent manner. Interacts with STING1. Interacts with SAR1B. Interacts with TMEM41B.

It localises to the endoplasmic reticulum membrane. The protein resides in the endoplasmic reticulum-Golgi intermediate compartment membrane. It is found in the golgi apparatus membrane. In terms of biological role, endoplasmic reticulum cargo receptor that mediates the export of lipoproteins by recruiting cargos into COPII vesicles to facilitate their secretion. Acts as a cargo receptor for lipoproteins bearing both APOB and APOA1, thereby regulating lipoprotein delivery and the maintenance of lipid homeostasis. Synergizes with the GTPase SAR1B to mediate transport of circulating lipoproteins. Promotes the secretion of PCSK9. Also mediates the efficient secretion of erythropoietin (EPO). May also play a role in the maintenance of the architecture of the endoplasmic reticulum-Golgi intermediate compartment and of the Golgi. This chain is Surfeit locus protein 4, found in Mus musculus (Mouse).